The chain runs to 148 residues: MGLEKSLMLFPLLVLVLGLVQPSLGRESSAMKFERQHMDSAGTGSSPTYCNQMMMRREMTNGSCKPVNTFVHEPLAHVHAACSQKNVTCKNGKGNCYKSSSALHITDCRLKGNSKYPNCDYQTSNYQKRIIVACEGNPYVPVHLDASV.

The signal sequence occupies residues 1–25; that stretch reads MGLEKSLMLFPLLVLVLGLVQPSLG. K32 and R35 together coordinate substrate. Residue H37 is the Proton acceptor of the active site. Cystine bridges form between C50/C108, C64/C119, C82/C134, and C89/C96. Residues 65 to 69, K90, and R109 each bind substrate; that span reads KPVNT. H143 acts as the Proton donor in catalysis.

Belongs to the pancreatic ribonuclease family. As to quaternary structure, monomer. Interacts with and forms tight 1:1 complexes with RNH1. Dimerization of two such complexes may occur. Interaction with RNH1 inhibits this protein. As to expression, pancreas.

It is found in the secreted. The catalysed reaction is an [RNA] containing cytidine + H2O = an [RNA]-3'-cytidine-3'-phosphate + a 5'-hydroxy-ribonucleotide-3'-[RNA].. It catalyses the reaction an [RNA] containing uridine + H2O = an [RNA]-3'-uridine-3'-phosphate + a 5'-hydroxy-ribonucleotide-3'-[RNA].. Endonuclease that catalyzes the cleavage of RNA on the 3' side of pyrimidine nucleotides. Acts on single-stranded and double-stranded RNA. The chain is Ribonuclease pancreatic (RNASE1) from Gerbilliscus gambianus (Gambian gerbil).